The primary structure comprises 169 residues: Mu-like prophage FluMu host-nuclease inhibitor protein gam (169 aa).

The protein to phage Mu protein gam.

In terms of biological role, protects linear double-stranded DNA of Mu genome from exonuclease degradation. This chain is Mu-like prophage FluMu host-nuclease inhibitor protein gam, found in Haemophilus influenzae (strain ATCC 51907 / DSM 11121 / KW20 / Rd).